A 124-amino-acid polypeptide reads, in one-letter code: Small ribosomal subunit protein uS12 (124 aa).

At aspartate 89 the chain carries 3-methylthioaspartic acid. Residues 104–124 are disordered; it reads LQGVKDRKQSRSKYGAKRPKK. Positions 113–124 are enriched in basic residues; that stretch reads SRSKYGAKRPKK.

The protein belongs to the universal ribosomal protein uS12 family. As to quaternary structure, part of the 30S ribosomal subunit. Contacts proteins S8 and S17. May interact with IF1 in the 30S initiation complex.

In terms of biological role, with S4 and S5 plays an important role in translational accuracy. Functionally, interacts with and stabilizes bases of the 16S rRNA that are involved in tRNA selection in the A site and with the mRNA backbone. Located at the interface of the 30S and 50S subunits, it traverses the body of the 30S subunit contacting proteins on the other side and probably holding the rRNA structure together. The combined cluster of proteins S8, S12 and S17 appears to hold together the shoulder and platform of the 30S subunit. The polypeptide is Small ribosomal subunit protein uS12 (Thiomonas delicata (Thiomonas cuprina)).